A 319-amino-acid polypeptide reads, in one-letter code: Type II methyltransferase M.MpnI (319 aa).

Belongs to the N(4)/N(6)-methyltransferase family.

The catalysed reaction is a 2'-deoxyadenosine in DNA + S-adenosyl-L-methionine = an N(6)-methyl-2'-deoxyadenosine in DNA + S-adenosyl-L-homocysteine + H(+). Functionally, a methylase that recognizes the double-stranded sequence 5'-CTAT-3' and methylates A-3 on one strand; probably responsible for all of the methylation on this site in the genome. This chain is Type II methyltransferase M.MpnI, found in Mycoplasma pneumoniae (strain ATCC 29342 / M129 / Subtype 1) (Mycoplasmoides pneumoniae).